A 134-amino-acid polypeptide reads, in one-letter code: Cytochrome b (134 aa).

The next 3 membrane-spanning stretches (helical) occupy residues 33–53 (FGSLLGVCLAVQILTGLFLAM), 77–98 (WLLRYLHANGASMFFICLYLHV), and 113–133 (WNIGILLLFAVMATAFMGYVL). His-83 and His-97 together coordinate heme b.

Belongs to the cytochrome b family. In terms of assembly, the cytochrome bc1 complex contains 11 subunits: 3 respiratory subunits (MT-CYB, CYC1 and UQCRFS1), 2 core proteins (UQCRC1 and UQCRC2) and 6 low-molecular weight proteins (UQCRH/QCR6, UQCRB/QCR7, UQCRQ/QCR8, UQCR10/QCR9, UQCR11/QCR10 and a cleavage product of UQCRFS1). This cytochrome bc1 complex then forms a dimer. It depends on heme b as a cofactor.

It is found in the mitochondrion inner membrane. Component of the ubiquinol-cytochrome c reductase complex (complex III or cytochrome b-c1 complex) that is part of the mitochondrial respiratory chain. The b-c1 complex mediates electron transfer from ubiquinol to cytochrome c. Contributes to the generation of a proton gradient across the mitochondrial membrane that is then used for ATP synthesis. This chain is Cytochrome b (MT-CYB), found in Chiroderma salvini (Salvin's big-eyed bat).